The following is a 147-amino-acid chain: UPF0306 protein YhbP (147 aa).

This sequence belongs to the UPF0306 family.

The sequence is that of UPF0306 protein YhbP from Escherichia coli O157:H7.